Here is a 286-residue protein sequence, read N- to C-terminus: 33 kDa chaperonin (286 aa).

2 disulfide bridges follow: cysteine 233–cysteine 235 and cysteine 267–cysteine 270.

The protein belongs to the HSP33 family. Under oxidizing conditions two disulfide bonds are formed involving the reactive cysteines. Under reducing conditions zinc is bound to the reactive cysteines and the protein is inactive.

The protein localises to the cytoplasm. Its function is as follows. Redox regulated molecular chaperone. Protects both thermally unfolding and oxidatively damaged proteins from irreversible aggregation. Plays an important role in the bacterial defense system toward oxidative stress. The chain is 33 kDa chaperonin from Histophilus somni (strain 129Pt) (Haemophilus somnus).